The sequence spans 215 residues: Somatotropin (215 aa).

An N-terminal signal peptide occupies residues 1-25 (MAPGARISLLLLITFTLLGPQRSGA). His-44 lines the Zn(2+) pocket. Cys-77 and Cys-188 are joined by a disulfide. At Ser-130 the chain carries Phosphoserine. Glu-197 is a Zn(2+) binding site. The cysteines at positions 205 and 213 are disulfide-linked.

The protein belongs to the somatotropin/prolactin family.

It is found in the secreted. In terms of biological role, plays an important role in growth control. Its major role in stimulating body growth is to stimulate the liver and other tissues to secrete IGF1. It stimulates both the differentiation and proliferation of myoblasts. It also stimulates amino acid uptake and protein synthesis in muscle and other tissues. This chain is Somatotropin (GH1), found in Trichosurus vulpecula (Brush-tailed possum).